Reading from the N-terminus, the 278-residue chain is Coiled-coil domain-containing protein 121 (278 aa).

Coiled-coil stretches lie at residues 1 to 30 and 105 to 243; these read MTDLNKHIKQAQTQRKQLLEESRELHREKL and QAMR…LIQA. The tract at residues 253–278 is disordered; sequence QCLNRQDVPKTTPSLPQGTKSRINPK.

This chain is Coiled-coil domain-containing protein 121 (CCDC121), found in Homo sapiens (Human).